Consider the following 258-residue polypeptide: Type III pantothenate kinase (258 aa).

Position 6–13 (6–13) interacts with ATP; that stretch reads DVGNTNIV. Residues tyrosine 100 and 107–110 each bind substrate; that span reads GADR. The active-site Proton acceptor is aspartate 109. Aspartate 129 lines the K(+) pocket. Residue threonine 132 participates in ATP binding. Threonine 184 contacts substrate.

Belongs to the type III pantothenate kinase family. As to quaternary structure, homodimer. The cofactor is NH4(+). Requires K(+) as cofactor.

It is found in the cytoplasm. It carries out the reaction (R)-pantothenate + ATP = (R)-4'-phosphopantothenate + ADP + H(+). The protein operates within cofactor biosynthesis; coenzyme A biosynthesis; CoA from (R)-pantothenate: step 1/5. In terms of biological role, catalyzes the phosphorylation of pantothenate (Pan), the first step in CoA biosynthesis. The polypeptide is Type III pantothenate kinase (Clostridium botulinum (strain Kyoto / Type A2)).